A 460-amino-acid chain; its full sequence is ATP synthase subunit beta (460 aa).

150 to 157 (GGAGVGKT) contributes to the ATP binding site.

The protein belongs to the ATPase alpha/beta chains family. As to quaternary structure, F-type ATPases have 2 components, CF(1) - the catalytic core - and CF(0) - the membrane proton channel. CF(1) has five subunits: alpha(3), beta(3), gamma(1), delta(1), epsilon(1). CF(0) has three main subunits: a(1), b(2) and c(9-12). The alpha and beta chains form an alternating ring which encloses part of the gamma chain. CF(1) is attached to CF(0) by a central stalk formed by the gamma and epsilon chains, while a peripheral stalk is formed by the delta and b chains.

The protein resides in the cell inner membrane. The enzyme catalyses ATP + H2O + 4 H(+)(in) = ADP + phosphate + 5 H(+)(out). Functionally, produces ATP from ADP in the presence of a proton gradient across the membrane. The catalytic sites are hosted primarily by the beta subunits. The sequence is that of ATP synthase subunit beta from Klebsiella pneumoniae subsp. pneumoniae (strain ATCC 700721 / MGH 78578).